The chain runs to 209 residues: LexA repressor (209 aa).

The H-T-H motif DNA-binding region spans 32–52 (VREIGKAVDLSSTSTVHGHLA). Active-site for autocatalytic cleavage activity residues include serine 131 and lysine 169.

The protein belongs to the peptidase S24 family. Homodimer.

The enzyme catalyses Hydrolysis of Ala-|-Gly bond in repressor LexA.. Represses a number of genes involved in the response to DNA damage (SOS response), including recA and lexA. In the presence of single-stranded DNA, RecA interacts with LexA causing an autocatalytic cleavage which disrupts the DNA-binding part of LexA, leading to derepression of the SOS regulon and eventually DNA repair. This is LexA repressor from Enterococcus faecalis (strain ATCC 700802 / V583).